The chain runs to 278 residues: Large ribosomal subunit protein uL2 (278 aa).

The interval 222–278 is disordered; it reads GVVMNPIDHPHGGGEGRTSGGRHPVTPWGKPTKGKKTRSNKSTNKFILISRHKRKKK.

Belongs to the universal ribosomal protein uL2 family. In terms of assembly, part of the 50S ribosomal subunit. Forms a bridge to the 30S subunit in the 70S ribosome.

Its function is as follows. One of the primary rRNA binding proteins. Required for association of the 30S and 50S subunits to form the 70S ribosome, for tRNA binding and peptide bond formation. It has been suggested to have peptidyltransferase activity; this is somewhat controversial. Makes several contacts with the 16S rRNA in the 70S ribosome. The polypeptide is Large ribosomal subunit protein uL2 (Afipia carboxidovorans (strain ATCC 49405 / DSM 1227 / KCTC 32145 / OM5) (Oligotropha carboxidovorans)).